Consider the following 343-residue polypeptide: MTIAAAEALTRCIEHREIFHDEMLHLMRLLMRGELSPQIASALLMGLRVKKETVGEITAAAQVMREFATPVVTPNPQDLLDMCGTGGDGSHTFNISTTAMFVAAAAGVPIAKHGNRSASSSSGSADVLEALGANLQLTPEEVAECVAATGIGFMFAPAHHGAMKNVAAVRKELGVRTIFNILGPLTNPAGAANQLMGVFHPDLVGIQVRVLERLGSRHVLVVHGKDGMDEASLGAATMVGELKDGVVREYEIHPEDYGLSMMSNRGIKVSNREESRALVIEALDNVDGVARDIVALNAGLAIYAGNKADSIPEALALAFETISNGSARAKLEEFCAYTRKFQK.

5-phospho-alpha-D-ribose 1-diphosphate-binding positions include Gly84, Gly87–Asp88, Thr92, Asn94–Thr97, Lys112–Ser120, and Ser124. Gly84 is a binding site for anthranilate. Ser96 is a binding site for Mg(2+). An anthranilate-binding site is contributed by Asn115. Arg170 serves as a coordination point for anthranilate. Mg(2+)-binding residues include Asp229 and Glu230.

Belongs to the anthranilate phosphoribosyltransferase family. In terms of assembly, homodimer. Mg(2+) serves as cofactor.

It carries out the reaction N-(5-phospho-beta-D-ribosyl)anthranilate + diphosphate = 5-phospho-alpha-D-ribose 1-diphosphate + anthranilate. The protein operates within amino-acid biosynthesis; L-tryptophan biosynthesis; L-tryptophan from chorismate: step 2/5. Functionally, catalyzes the transfer of the phosphoribosyl group of 5-phosphorylribose-1-pyrophosphate (PRPP) to anthranilate to yield N-(5'-phosphoribosyl)-anthranilate (PRA). The sequence is that of Anthranilate phosphoribosyltransferase from Bordetella bronchiseptica (strain ATCC BAA-588 / NCTC 13252 / RB50) (Alcaligenes bronchisepticus).